A 613-amino-acid polypeptide reads, in one-letter code: Probable indole-3-acetic acid-amido synthetase GH3.12 (613 aa).

This sequence belongs to the IAA-amido conjugating enzyme family. Expressed in roots.

Functionally, may catalyze the synthesis of indole-3-acetic acid (IAA)-amino acid conjugates, providing a mechanism for the plant to cope with the presence of excess auxin. This is Probable indole-3-acetic acid-amido synthetase GH3.12 (GH3.12) from Oryza sativa subsp. japonica (Rice).